Reading from the N-terminus, the 109-residue chain is MEEAKGPVKHVLLASFKDGVSPEKIEELIKGYANLVNLIEPMKAFHWGKDVSIENLHQGYTHIFESTFESKEAVAEYIAHPAHVEFATIFLGSLDKVLVIDYKPTSVSL.

The Stress-response A/B barrel domain occupies 8-102; the sequence is VKHVLLASFK…SLDKVLVIDY (95 aa). Mg(2+) contacts are provided by Val-36, Ile-39, Glu-40, and Met-42.

Homodimer. Mg(2+) serves as cofactor.

Heat stable protein involved in defense against fungal pathogens. Possesses antifungal activity against diverse pathogenic fungi. Possesses antimicrobial activity. Possesses ribonuclease activity. This chain is Stress-response A/B barrel domain-containing protein HS1, found in Arabidopsis thaliana (Mouse-ear cress).